Here is a 421-residue protein sequence, read N- to C-terminus: Protein FAM110C (421 aa).

Disordered regions lie at residues 1–36, 51–80, and 141–266; these read MRALPTLDSLARMRPPLGDPRAAEDTLTPRPANKSA, TLGSSRGPVSEHRVPEAPGVQHRNPIPSAL, and TTRV…PASM. Composition is skewed to basic and acidic residues over residues 143–155, 185–202, and 232–249; these read RVADEDKTTKETE and PAEKTRVANEDKTTKETE. S350 is subject to Phosphoserine.

The protein belongs to the FAM110 family. In terms of assembly, interacts with AKT1; the interaction is transient and follows AKT1 activation. Interacts with PPP2CA and alpha-tubulin.

It localises to the cytoplasm. It is found in the cytoskeleton. Its subcellular location is the microtubule organizing center. The protein resides in the centrosome. The protein localises to the spindle pole. It localises to the nucleus. Functionally, may play a role in microtubule organization. May play a role in cell spreading and cell migration of epithelial cells; the function may involve the AKT1 signaling pathway. The chain is Protein FAM110C (Fam110c) from Mus musculus (Mouse).